We begin with the raw amino-acid sequence, 715 residues long: Ribosomal RNA large subunit methyltransferase K/L (715 aa).

Residues 43–154 form the THUMP domain; it reads TQYRALLWSR…RDDLVLSLDL (112 aa).

This sequence belongs to the methyltransferase superfamily. RlmKL family.

The protein localises to the cytoplasm. It catalyses the reaction guanosine(2445) in 23S rRNA + S-adenosyl-L-methionine = N(2)-methylguanosine(2445) in 23S rRNA + S-adenosyl-L-homocysteine + H(+). It carries out the reaction guanosine(2069) in 23S rRNA + S-adenosyl-L-methionine = N(2)-methylguanosine(2069) in 23S rRNA + S-adenosyl-L-homocysteine + H(+). Functionally, specifically methylates the guanine in position 2445 (m2G2445) and the guanine in position 2069 (m7G2069) of 23S rRNA. This chain is Ribosomal RNA large subunit methyltransferase K/L, found in Mannheimia succiniciproducens (strain KCTC 0769BP / MBEL55E).